The sequence spans 64 residues: MAKKGTRVVVTLECTEARTSSEPRRSNGVSRYTTEKNKRNTTERLELKKFNPHLNKMTIHKEIK.

The span at 16–25 (EARTSSEPRR) shows a compositional bias: basic and acidic residues. Positions 16–41 (EARTSSEPRRSNGVSRYTTEKNKRNT) are disordered.

The protein belongs to the bacterial ribosomal protein bL33 family.

This is Large ribosomal subunit protein bL33 from Prochlorococcus marinus subsp. pastoris (strain CCMP1986 / NIES-2087 / MED4).